Consider the following 232-residue polypeptide: 6-phosphogluconolactonase (232 aa).

The protein belongs to the glucosamine/galactosamine-6-phosphate isomerase family. 6-phosphogluconolactonase subfamily.

The enzyme catalyses 6-phospho-D-glucono-1,5-lactone + H2O = 6-phospho-D-gluconate + H(+). It functions in the pathway carbohydrate degradation; pentose phosphate pathway; D-ribulose 5-phosphate from D-glucose 6-phosphate (oxidative stage): step 2/3. In terms of biological role, hydrolysis of 6-phosphogluconolactone to 6-phosphogluconate. In Rhizobium meliloti (strain 1021) (Ensifer meliloti), this protein is 6-phosphogluconolactonase (pgl).